Consider the following 60-residue polypeptide: Temporin-MT5 (60 aa).

The first 22 residues, 1–22, serve as a signal peptide directing secretion; it reads MFTLKKPLLLLFFLATINLSLC. The propeptide at 23 to 44 is removed in mature form; that stretch reads EQERNAEEERRDEPDERNAEVE. A Phenylalanine amide modification is found at F58.

Belongs to the frog skin active peptide (FSAP) family. Temporin subfamily. As to expression, expressed by the skin glands.

Its subcellular location is the secreted. Functionally, antimicrobial peptide. In Amolops mantzorum (Sichuan torrent frog), this protein is Temporin-MT5.